Here is a 61-residue protein sequence, read N- to C-terminus: Metallothionein-1M (61 aa).

The interval 1–29 (MDPNCSCTTGVSCACTGSCTCKECKCTSC) is beta. 20 residues coordinate a divalent metal cation: Cys-5, Cys-7, Cys-13, Cys-15, Cys-19, Cys-21, Cys-24, Cys-26, Cys-29, Cys-33, Cys-34, Cys-36, Cys-37, Cys-41, Cys-44, Cys-48, Cys-50, Cys-57, Cys-59, and Cys-60. The alpha stretch occupies residues 30–61 (KKSCCSCCPVGCAKCAHGCVCKGTLENCSCCA).

Belongs to the metallothionein superfamily. Type 1 family. Monomer.

Metallothioneins have a high content of cysteine residues that bind various heavy metals; these proteins are transcriptionally regulated by both heavy metals and glucocorticoids. The chain is Metallothionein-1M (MT1M) from Homo sapiens (Human).